Consider the following 447-residue polypeptide: N-succinylarginine dihydrolase (447 aa).

Residues 19–28, Asn-110, and 137–138 each bind substrate; these read AGLSFGNEAS and HR. Glu-174 is a catalytic residue. Arg-212 serves as a coordination point for substrate. His-248 is a catalytic residue. Positions 250 and 359 each coordinate substrate. Catalysis depends on Cys-365, which acts as the Nucleophile.

The protein belongs to the succinylarginine dihydrolase family. Homodimer.

The catalysed reaction is N(2)-succinyl-L-arginine + 2 H2O + 2 H(+) = N(2)-succinyl-L-ornithine + 2 NH4(+) + CO2. It functions in the pathway amino-acid degradation; L-arginine degradation via AST pathway; L-glutamate and succinate from L-arginine: step 2/5. Functionally, catalyzes the hydrolysis of N(2)-succinylarginine into N(2)-succinylornithine, ammonia and CO(2). The polypeptide is N-succinylarginine dihydrolase (Escherichia coli O1:K1 / APEC).